Here is a 160-residue protein sequence, read N- to C-terminus: SsrA-binding protein (160 aa).

The protein belongs to the SmpB family.

It is found in the cytoplasm. In terms of biological role, required for rescue of stalled ribosomes mediated by trans-translation. Binds to transfer-messenger RNA (tmRNA), required for stable association of tmRNA with ribosomes. tmRNA and SmpB together mimic tRNA shape, replacing the anticodon stem-loop with SmpB. tmRNA is encoded by the ssrA gene; the 2 termini fold to resemble tRNA(Ala) and it encodes a 'tag peptide', a short internal open reading frame. During trans-translation Ala-aminoacylated tmRNA acts like a tRNA, entering the A-site of stalled ribosomes, displacing the stalled mRNA. The ribosome then switches to translate the ORF on the tmRNA; the nascent peptide is terminated with the 'tag peptide' encoded by the tmRNA and targeted for degradation. The ribosome is freed to recommence translation, which seems to be the essential function of trans-translation. This Pasteurella multocida (strain Pm70) protein is SsrA-binding protein.